Consider the following 460-residue polypeptide: Argininosuccinate lyase (460 aa).

It belongs to the lyase 1 family. Argininosuccinate lyase subfamily.

Its subcellular location is the cytoplasm. It carries out the reaction 2-(N(omega)-L-arginino)succinate = fumarate + L-arginine. Its pathway is amino-acid biosynthesis; L-arginine biosynthesis; L-arginine from L-ornithine and carbamoyl phosphate: step 3/3. This Rhodopirellula baltica (strain DSM 10527 / NCIMB 13988 / SH1) protein is Argininosuccinate lyase.